The sequence spans 29 residues: Potassium channel toxin alpha-KTx 8.3 (29 aa).

Intrachain disulfides connect cysteine 3/cysteine 19, cysteine 6/cysteine 24, and cysteine 10/cysteine 26.

Belongs to the short scorpion toxin superfamily. Potassium channel inhibitor family. Alpha-KTx 08 subfamily. In terms of tissue distribution, expressed by the venom gland.

It is found in the secreted. Specific and potent inhibitor of ClC-2/CLCN2 chloride channel. It slows ClC-2/CLCN2 activation by increasing the latency to first opening by nearly 8-fold but is unable to inhibit open channels, suggesting that this toxin inhibits channel activation gating. The protein is Potassium channel toxin alpha-KTx 8.3 of Leiurus hebraeus (Hebrew deathstalker scorpion).